A 316-amino-acid polypeptide reads, in one-letter code: Acetyl-coenzyme A carboxylase carboxyl transferase subunit alpha (316 aa).

In terms of domain architecture, CoA carboxyltransferase C-terminal spans 35 to 292; the sequence is EIEILSQKLE…KTYVLQELKD (258 aa).

It belongs to the AccA family. Acetyl-CoA carboxylase is a heterohexamer composed of biotin carboxyl carrier protein (AccB), biotin carboxylase (AccC) and two subunits each of ACCase subunit alpha (AccA) and ACCase subunit beta (AccD).

It localises to the cytoplasm. The catalysed reaction is N(6)-carboxybiotinyl-L-lysyl-[protein] + acetyl-CoA = N(6)-biotinyl-L-lysyl-[protein] + malonyl-CoA. It functions in the pathway lipid metabolism; malonyl-CoA biosynthesis; malonyl-CoA from acetyl-CoA: step 1/1. Component of the acetyl coenzyme A carboxylase (ACC) complex. First, biotin carboxylase catalyzes the carboxylation of biotin on its carrier protein (BCCP) and then the CO(2) group is transferred by the carboxyltransferase to acetyl-CoA to form malonyl-CoA. The protein is Acetyl-coenzyme A carboxylase carboxyl transferase subunit alpha of Alkaliphilus oremlandii (strain OhILAs) (Clostridium oremlandii (strain OhILAs)).